The sequence spans 139 residues: Thioredoxin-like protein Clot (139 aa).

A Thioredoxin domain is found at 1-136 (MTVEKVDATV…LADKVDAVVN (136 aa)). Active-site nucleophile residues include cysteine 49 and cysteine 52. Cysteine 49 and cysteine 52 are joined by a disulfide.

It belongs to the thioredoxin family.

Its function is as follows. Probable thiol-disulfide oxidoreductase that may participate in various redox reactions. This chain is Thioredoxin-like protein Clot, found in Oryza sativa subsp. japonica (Rice).